The following is a 134-amino-acid chain: D-ribose pyranase (134 aa).

The Proton donor role is filled by histidine 20. Residues aspartate 28, histidine 99, and phenylalanine 123–asparagine 125 each bind substrate.

It belongs to the RbsD / FucU family. RbsD subfamily. In terms of assembly, homodecamer.

Its subcellular location is the cytoplasm. The enzyme catalyses beta-D-ribopyranose = beta-D-ribofuranose. It participates in carbohydrate metabolism; D-ribose degradation; D-ribose 5-phosphate from beta-D-ribopyranose: step 1/2. In terms of biological role, catalyzes the interconversion of beta-pyran and beta-furan forms of D-ribose. This Staphylococcus carnosus (strain TM300) protein is D-ribose pyranase.